We begin with the raw amino-acid sequence, 997 residues long: Disease resistance protein RML1A (997 aa).

In terms of domain architecture, TIR spans 12 to 176; the sequence is WRYRVFTSFH…KIARDVSEKL (165 aa). Residue Glu-87 is part of the active site. The region spanning 191 to 447 is the NB-ARC domain; it reads EAHLRKIQSL…HIAIFFNYED (257 aa). 10 LRR repeats span residues 194-218, 534-557, 600-623, 624-647, 649-670, 671-693, 694-714, 715-737, 758-781, and 783-808; these read LRKI…GPAG, TSGI…RFLS, AENL…TQLL, TKLK…SNAT, LEML…IKNL, HKLD…NINL, ASLE…PAFS, TKIK…ITHC, PSSL…CIKD, and QRLD…SLRL.

The enzyme catalyses NAD(+) + H2O = ADP-D-ribose + nicotinamide + H(+). Functionally, TIR-NB-LRR receptor-like protein that confers resistance to the pathogen Leptosphaeria maculans (blackleg disease). This is Disease resistance protein RML1A from Arabidopsis thaliana (Mouse-ear cress).